Consider the following 144-residue polypeptide: Arsenate reductase ArsI1 (144 aa).

The active-site Nucleophile; cysteine thioarsenate intermediate is Cys-14.

This sequence belongs to the ArsC family.

The enzyme catalyses [glutaredoxin]-dithiol + arsenate + glutathione + H(+) = glutathionyl-S-S-[glutaredoxin] + arsenite + H2O. In terms of biological role, catalyzes the reduction of arsenate [As(V)] to arsenite [As(III)]. Does not constitute the major arsenate reductase in cells: essential only in the absence of ArsC (AC P74313). The polypeptide is Arsenate reductase ArsI1 (Synechocystis sp. (strain ATCC 27184 / PCC 6803 / Kazusa)).